The primary structure comprises 311 residues: Ornithine carbamoyltransferase (311 aa).

Residues 54–57 (STRT), Gln-81, Arg-105, and 132–135 (HPCQ) contribute to the carbamoyl phosphate site. Residues Asn-164, Asp-228, and 232–233 (SM) each bind L-ornithine. Carbamoyl phosphate-binding positions include 268-269 (CL) and Arg-296.

Belongs to the aspartate/ornithine carbamoyltransferase superfamily. OTCase family.

The protein resides in the cytoplasm. The enzyme catalyses carbamoyl phosphate + L-ornithine = L-citrulline + phosphate + H(+). The protein operates within amino-acid biosynthesis; L-arginine biosynthesis; L-arginine from L-ornithine and carbamoyl phosphate: step 1/3. Reversibly catalyzes the transfer of the carbamoyl group from carbamoyl phosphate (CP) to the N(epsilon) atom of ornithine (ORN) to produce L-citrulline. The polypeptide is Ornithine carbamoyltransferase (Renibacterium salmoninarum (strain ATCC 33209 / DSM 20767 / JCM 11484 / NBRC 15589 / NCIMB 2235)).